The sequence spans 259 residues: Adenylosuccinate synthetase (259 aa).

Residues glycine 3 to lysine 9 and glycine 31 to threonine 33 contribute to the GTP site. Residue aspartate 4 is the Proton acceptor of the active site. Residues aspartate 4 and glycine 31 each contribute to the Mg(2+) site. An IMP-binding site is contributed by aspartate 4–lysine 7. The active-site Proton donor is histidine 32. IMP-binding residues include threonine 120, arginine 134, glutamine 215, and threonine 230.

This sequence belongs to the adenylosuccinate synthetase family. As to quaternary structure, homodimer. It depends on Mg(2+) as a cofactor.

The protein localises to the cytoplasm. It carries out the reaction IMP + L-aspartate + GTP = N(6)-(1,2-dicarboxyethyl)-AMP + GDP + phosphate + 2 H(+). The protein operates within purine metabolism; AMP biosynthesis via de novo pathway; AMP from IMP: step 1/2. Its function is as follows. Plays an important role in the de novo pathway of purine nucleotide biosynthesis. Catalyzes the first committed step in the biosynthesis of AMP from IMP. This Aggregatibacter actinomycetemcomitans (Actinobacillus actinomycetemcomitans) protein is Adenylosuccinate synthetase.